Here is a 310-residue protein sequence, read N- to C-terminus: Olfactory receptor 5AR1 (310 aa).

Over 1 to 25 (MDKENHSVVTEFVFMGITQDPQLQI) the chain is Extracellular. N-linked (GlcNAc...) asparagine glycosylation occurs at N5. The helical transmembrane segment at 26–46 (IFFVVFLLVYLVNVIGNVGMI) threads the bilayer. Residues 47 to 54 (ILIITDSQ) lie on the Cytoplasmic side of the membrane. A helical transmembrane segment spans residues 55 to 75 (LHTPMYFFLCNLSFVDLGYSS). Residues 76-99 (AIAPRMLADFLTKHKVISFSSCAT) are Extracellular-facing. Residues C97 and C189 are joined by a disulfide bond. A helical transmembrane segment spans residues 100–120 (QFAFFVGFVDAECYVLAAMAY). Residues 121–133 (DRFVAICRPLHYS) are Cytoplasmic-facing. Residues 134–154 (TLMSKKVCLVLMLGSYFAGLV) form a helical membrane-spanning segment. Topologically, residues 155–196 (SLVAHTSLTFSLSYCGSNIINHFFCEIPPLLALSCSDTYISE) are extracellular. A helical membrane pass occupies residues 197 to 217 (ILLFSLCGFIEFSTILIIFIS). C203 is a binding site for Cu cation. Residues 218–237 (YAFILIAIIRIRSAEGRLKA) lie on the Cytoplasmic side of the membrane. Residues 238 to 258 (FSTCGSHLTGVTLFYGTVMFM) traverse the membrane as a helical segment. M256 and R261 together coordinate Cu cation. The Extracellular segment spans residues 259-271 (YLRPTSSYSLDQD). Residues 272 to 292 (KWASVFYTIIIPMLNPLIYSL) form a helical membrane-spanning segment. Residues 293 to 310 (RNKDVKAAFKKLIGKKPQ) are Cytoplasmic-facing.

It belongs to the G-protein coupled receptor 1 family.

It localises to the cell membrane. Its activity is regulated as follows. Copper binding enhances receptor activity in response to odorant binding. Olfactory receptor that is activated by the binding of organosulfur odorants with thioether groups such as (methylthio)methanethiol (MTMT). The activity of this receptor is mediated by G proteins which activate adenylyl cyclase. The protein is Olfactory receptor 5AR1 of Mus musculus (Mouse).